The sequence spans 89 residues: Neuropeptide S (89 aa).

The N-terminal stretch at 1–23 (MIGSLKFNFILFLLISTMHMFWC) is a signal peptide. The propeptide occupies 24 to 67 (HPISSSKVPGKSDYFVILLNSCPTRMDRRVGLDFLKPILEKTLM).

The protein resides in the secreted. Functionally, modulates arousal and anxiety. May play an important anorexigenic role. Binds to its receptor NPSR1 with nanomolar affinity to increase intracellular calcium concentrations. The polypeptide is Neuropeptide S (NPS) (Bos taurus (Bovine)).